Here is a 612-residue protein sequence, read N- to C-terminus: Dihydroxy-acid dehydratase (612 aa).

Asp81 provides a ligand contact to Mg(2+). Residue Cys122 participates in [2Fe-2S] cluster binding. Positions 123 and 124 each coordinate Mg(2+). Lys124 bears the N6-carboxylysine mark. Cys193 serves as a coordination point for [2Fe-2S] cluster. Glu489 contacts Mg(2+). Ser515 (proton acceptor) is an active-site residue.

Belongs to the IlvD/Edd family. As to quaternary structure, homodimer. [2Fe-2S] cluster serves as cofactor. The cofactor is Mg(2+).

It carries out the reaction (2R)-2,3-dihydroxy-3-methylbutanoate = 3-methyl-2-oxobutanoate + H2O. It catalyses the reaction (2R,3R)-2,3-dihydroxy-3-methylpentanoate = (S)-3-methyl-2-oxopentanoate + H2O. The protein operates within amino-acid biosynthesis; L-isoleucine biosynthesis; L-isoleucine from 2-oxobutanoate: step 3/4. It functions in the pathway amino-acid biosynthesis; L-valine biosynthesis; L-valine from pyruvate: step 3/4. Functions in the biosynthesis of branched-chain amino acids. Catalyzes the dehydration of (2R,3R)-2,3-dihydroxy-3-methylpentanoate (2,3-dihydroxy-3-methylvalerate) into 2-oxo-3-methylpentanoate (2-oxo-3-methylvalerate) and of (2R)-2,3-dihydroxy-3-methylbutanoate (2,3-dihydroxyisovalerate) into 2-oxo-3-methylbutanoate (2-oxoisovalerate), the penultimate precursor to L-isoleucine and L-valine, respectively. This Xanthomonas axonopodis pv. citri (strain 306) protein is Dihydroxy-acid dehydratase.